The sequence spans 662 residues: Pro-neuregulin-1, membrane-bound isoform (662 aa).

The propeptide occupies 1 to 13 (MSERKEGRGKGKG). The disordered stretch occupies residues 1–52 (MSERKEGRGKGKGKKKDRGSRGKPGPAEGDPSPALPPRLKEMKSQESAAGSK). At 14–265 (KKKDRGSRGK…SKAEELYQKR (252 aa)) the chain is on the extracellular side. Positions 37 to 128 (PRLKEMKSQE…GNDSASANIT (92 aa)) constitute an Ig-like C2-type domain. A disulfide bridge links cysteine 57 with cysteine 112. Residues asparagine 120, asparagine 126, and asparagine 164 are each glycosylated (N-linked (GlcNAc...) asparagine). The EGF-like domain maps to 178-222 (HLIKCAEKEKTFCVNGGECFTVKDLSNPSRYLCKCPNEFTGDRCQ). 3 disulfide bridges follow: cysteine 182–cysteine 196, cysteine 190–cysteine 210, and cysteine 212–cysteine 221. Residues 266–288 (VLTITGICIALLVVGIMCVVAYC) traverse the membrane as a helical segment. Residues 289 to 662 (KTKKQRQKLH…VIANQDPIAV (374 aa)) are Cytoplasmic-facing. Low complexity predominate over residues 358-373 (SHYTSTAHHSTTVTQT). Disordered regions lie at residues 358 to 383 (SHYT…NGHT), 398 to 480 (SVEN…PVSS), and 547 to 610 (YETT…DTPF). The span at 374–383 (PSHSWSNGHT) shows a compositional bias: polar residues. The span at 410–420 (GPRGRLHGLGG) shows a compositional bias: gly residues. A compositionally biased stretch (basic and acidic residues) spans 425–445 (SFLRHARETPDSYRDSPHSER). The span at 564 to 574 (TNSRRAKRTKP) shows a compositional bias: basic residues. A compositionally biased stretch (low complexity) spans 585–596 (DSNTSSVSSNSE).

Belongs to the neuregulin family. As to quaternary structure, the cytoplasmic domain interacts with the LIM domain region of LIMK1. Forms a ternary complex with ERBB3 and ITGAV:ITGB3 or ITGA6:ITGB4. Interacts with NRDC and BACE1. Post-translationally, proteolytic cleavage close to the plasma membrane on the external face leads to the release of the soluble growth factor form. N- and O-glycosylated. Extensive glycosylation precedes the proteolytic cleavage. As to expression, widely expressed. Most tissues contain isoform alpha2A and isoform alpha2B. Isoform Alpha2 and isoform beta2 are the predominant forms in mesenchymal and non-neuronal organs. Isoform Beta1 is enriched in brain and spinal cord, but not in muscle and heart. Isoform Alpha2C is highly expressed in spinal cord, moderately in lung, brain, ovary, and stomach, in low amounts in the kidney, skin and heart and not detected in the liver, spleen, and placenta.

Its subcellular location is the cell membrane. The protein localises to the secreted. In terms of biological role, direct ligand for ERBB3 and ERBB4 tyrosine kinase receptors. Concomitantly recruits ERBB1 and ERBB2 coreceptors, resulting in ligand-stimulated tyrosine phosphorylation and activation of the ERBB receptors. The multiple isoforms perform diverse functions such as inducing growth and differentiation of epithelial, glial, neuronal, and skeletal muscle cells; inducing expression of acetylcholine receptor in synaptic vesicles during the formation of the neuromuscular junction; stimulating lobuloalveolar budding and milk production in the mammary gland and inducing differentiation of mammary tumor cells; stimulating Schwann cell proliferation; implication in the development of the myocardium such as trabeculation of the developing heart. Binds to ERBB4 and ERBB3. Acts as a ligand for integrins and binds (via EGF domain) to integrins ITGAV:ITGB3 or ITGA6:ITGB4. Its binding to integrins and subsequent ternary complex formation with integrins and ERRB3 are essential for NRG1-ERBB signaling. Induces the phosphorylation and activation of MAPK3/ERK1, MAPK1/ERK2 and AKT1, and ligand-dependent ERBB4 endocytosis is essential for the NRG1-mediated activation of these kinases in neurons. The protein is Pro-neuregulin-1, membrane-bound isoform (Nrg1) of Rattus norvegicus (Rat).